A 285-amino-acid polypeptide reads, in one-letter code: Gap junction Cx32.2 protein (285 aa).

Residues 2–19 (GDLGFLSKLLDQVQSHST) lie on the Cytoplasmic side of the membrane. The chain crosses the membrane as a helical span at residues 20 to 40 (VIGKIWMTVLFLFRIMVLGAG). Over 41 to 76 (AESVWGDEQSDFTCNTQQPGCENVCYDWTFPISHIR) the chain is Extracellular. Residues 77–99 (FWVLQIIFVSTPTLIYLGHAMHI) traverse the membrane as a helical segment. Topologically, residues 100-148 (IQQETKLRARLSSPGGSRLCKQPKYTNEQGKVKIKGNLLGSYLTQLVFK) are cytoplasmic. A helical membrane pass occupies residues 149–171 (IIIEAAFIVGQYYLYGFIMVPMF). Residues 172–194 (PCSKKPCPFTVECYMSRPTEKTI) lie on the Extracellular side of the membrane. Residues 195-217 (FIIFMLVVACVSLLLNVIEVFYL) form a helical membrane-spanning segment. The Cytoplasmic segment spans residues 218 to 285 (ICTRVRCGSR…AKEEKRLLSH (68 aa)). Positions 264-285 (ETSQSIGGSLDGAKEEKRLLSH) are disordered. The span at 275-285 (GAKEEKRLLSH) shows a compositional bias: basic and acidic residues.

It belongs to the connexin family. Beta-type (group I) subfamily. As to quaternary structure, a connexon is composed of a hexamer of connexins.

It localises to the cell membrane. The protein resides in the cell junction. Its subcellular location is the gap junction. In terms of biological role, one gap junction consists of a cluster of closely packed pairs of transmembrane channels, the connexons, through which materials of low MW diffuse from one cell to a neighboring cell. May be involved in ovarian follicular maturation. This Micropogonias undulatus (Atlantic croaker) protein is Gap junction Cx32.2 protein.